The following is an 887-amino-acid chain: Alanine--tRNA ligase (887 aa).

4 residues coordinate Zn(2+): His564, His568, Cys676, and His680.

This sequence belongs to the class-II aminoacyl-tRNA synthetase family. Zn(2+) is required as a cofactor.

The protein resides in the cytoplasm. It catalyses the reaction tRNA(Ala) + L-alanine + ATP = L-alanyl-tRNA(Ala) + AMP + diphosphate. Its function is as follows. Catalyzes the attachment of alanine to tRNA(Ala) in a two-step reaction: alanine is first activated by ATP to form Ala-AMP and then transferred to the acceptor end of tRNA(Ala). Also edits incorrectly charged Ser-tRNA(Ala) and Gly-tRNA(Ala) via its editing domain. The polypeptide is Alanine--tRNA ligase (Sinorhizobium medicae (strain WSM419) (Ensifer medicae)).